A 156-amino-acid polypeptide reads, in one-letter code: MGRQVKCPYCETKLDKDSAIPYKKRYYHEKCFNTWKQESDHRKELIQYICNLYGLTSPTGMMLKQIKEFQEEYGYKLKGIELALRYFYETLDNQPREGDGIGIVPFVYDEAKRHYIRQKAIRKSAEDPKNHKREEITLVIKKGMRKKRGLVDISML.

The protein is SPbeta prophage-derived uncharacterized protein YorH (yorH) of Bacillus subtilis (strain 168).